A 199-amino-acid polypeptide reads, in one-letter code: ATP-dependent Clp protease proteolytic subunit (199 aa).

Serine 97 functions as the Nucleophile in the catalytic mechanism. Histidine 122 is an active-site residue.

This sequence belongs to the peptidase S14 family. Fourteen ClpP subunits assemble into 2 heptameric rings which stack back to back to give a disk-like structure with a central cavity, resembling the structure of eukaryotic proteasomes.

It localises to the cytoplasm. It carries out the reaction Hydrolysis of proteins to small peptides in the presence of ATP and magnesium. alpha-casein is the usual test substrate. In the absence of ATP, only oligopeptides shorter than five residues are hydrolyzed (such as succinyl-Leu-Tyr-|-NHMec, and Leu-Tyr-Leu-|-Tyr-Trp, in which cleavage of the -Tyr-|-Leu- and -Tyr-|-Trp bonds also occurs).. In terms of biological role, cleaves peptides in various proteins in a process that requires ATP hydrolysis. Has a chymotrypsin-like activity. Plays a major role in the degradation of misfolded proteins. The chain is ATP-dependent Clp protease proteolytic subunit from Geobacter metallireducens (strain ATCC 53774 / DSM 7210 / GS-15).